We begin with the raw amino-acid sequence, 119 residues long: Large ribosomal subunit protein uL18 (119 aa).

The protein belongs to the universal ribosomal protein uL18 family. Part of the 50S ribosomal subunit; part of the 5S rRNA/L5/L18/L25 subcomplex. Contacts the 5S and 23S rRNAs.

In terms of biological role, this is one of the proteins that bind and probably mediate the attachment of the 5S RNA into the large ribosomal subunit, where it forms part of the central protuberance. This Anaeromyxobacter sp. (strain Fw109-5) protein is Large ribosomal subunit protein uL18.